The chain runs to 565 residues: DNA mismatch repair protein MutL (565 aa).

It belongs to the DNA mismatch repair MutL/HexB family.

Its function is as follows. This protein is involved in the repair of mismatches in DNA. It is required for dam-dependent methyl-directed DNA mismatch repair. May act as a 'molecular matchmaker', a protein that promotes the formation of a stable complex between two or more DNA-binding proteins in an ATP-dependent manner without itself being part of a final effector complex. The protein is DNA mismatch repair protein MutL of Desulforudis audaxviator (strain MP104C).